The following is a 633-amino-acid chain: Micronuclear linker histone polyprotein (633 aa).

DNA-binding regions (HMG box) lie at residues 12–74 and 96–164; these read PPKK…LFHY and PKKP…KKWN. Residues 170–633 form a disordered region; the sequence is AAQKKQTKRK…AYGKKANKKQ (464 aa). The segment covering 174–190 has biased composition (basic residues); that stretch reads KQTKRKNSTSKSRRSSS. 2 stretches are compositionally biased toward low complexity: residues 212–224 and 253–271; these read SSAS…SSSS and NSTS…SSSS. 2 stretches are compositionally biased toward basic residues: residues 272–309 and 330–352; these read KNKK…RKSS and SNKR…RKSS. Composition is skewed to basic and acidic residues over residues 353–374 and 382–401; these read KSQE…EGQK and AKRD…EART. A compositionally biased stretch (low complexity) spans 406–416; the sequence is NKSASKASKSG. Residues 417 to 444 show a composition bias toward basic residues; that stretch reads SKSKGKSASKSKGKSSSKGKNSKSRSAS. The span at 446–469 shows a compositional bias: polar residues; it reads PKSNAAQNSNNTHQTADSSENASS. Over residues 478-491 the composition is skewed to basic and acidic residues; that stretch reads RQREQKDMVNEKSN. Residues 496–524 are compositionally biased toward basic residues; that stretch reads SKGKKNSKSNTRSKSKSKSASKSRKNASK. Composition is skewed to basic and acidic residues over residues 540 to 550 and 559 to 612; these read SRSESKSKSEA and EVIE…EDSK.

All four histones are processed from the precursor molecule. In terms of processing, phosphorylated in growing and dividing cells but not in nongrowing (starved) cells. Post-translationally, the N-terminus of MIC LH-alpha and MIC LH-delta is blocked.

It is found in the nucleus. The protein resides in the chromosome. The chain is Micronuclear linker histone polyprotein (MLH) from Tetrahymena thermophila (strain SB210).